A 237-amino-acid chain; its full sequence is Sugar fermentation stimulation protein homolog (237 aa).

The protein belongs to the SfsA family.

In Pseudomonas fluorescens (strain Pf0-1), this protein is Sugar fermentation stimulation protein homolog.